Here is a 421-residue protein sequence, read N- to C-terminus: Testin (421 aa).

The PET domain occupies 92–199 (MILTNPVAAK…GDVKLPQEMD (108 aa)). 3 LIM zinc-binding domains span residues 234–297 (YSCY…CDSE), 299–359 (PRCA…NHAV), and 362–421 (QGCH…KMMS).

It belongs to the prickle / espinas / testin family. Interacts via LIM domain 1 with ZYX. Interacts (via LIM domain 3) with ENAH and VASP. Interacts with ALKBH4, talin, actin, alpha-actinin, GRIP1 and PXN. Interacts (via LIM domain 2) with ACTL7A (via N-terminus). Heterodimer with ACTL7A; the heterodimer interacts with ENAH to form a heterotrimer.

The protein localises to the cytoplasm. It is found in the cell junction. It localises to the focal adhesion. Its function is as follows. Scaffold protein that may play a role in cell adhesion, cell spreading and in the reorganization of the actin cytoskeleton. Plays a role in the regulation of cell proliferation. May act as a tumor suppressor. In Loxodonta africana (African elephant), this protein is Testin (TES).